The following is a 334-amino-acid chain: Beta-hexosaminidase (334 aa).

Substrate is bound by residues aspartate 62, arginine 70, arginine 131, and 161–162 (KH). The active-site Proton donor/acceptor is the histidine 174. The Nucleophile role is filled by aspartate 246.

It belongs to the glycosyl hydrolase 3 family. NagZ subfamily.

It is found in the cytoplasm. The catalysed reaction is Hydrolysis of terminal non-reducing N-acetyl-D-hexosamine residues in N-acetyl-beta-D-hexosaminides.. It participates in cell wall biogenesis; peptidoglycan recycling. Functionally, plays a role in peptidoglycan recycling by cleaving the terminal beta-1,4-linked N-acetylglucosamine (GlcNAc) from peptide-linked peptidoglycan fragments, giving rise to free GlcNAc, anhydro-N-acetylmuramic acid and anhydro-N-acetylmuramic acid-linked peptides. The chain is Beta-hexosaminidase from Tolumonas auensis (strain DSM 9187 / NBRC 110442 / TA 4).